Here is a 1684-residue protein sequence, read N- to C-terminus: GRIP and coiled-coil domain-containing protein 2 (1684 aa).

Met-1 is subject to N-acetylmethionine. The interval 1–22 (MEDLVQDGVASPATPGTGKSKL) is disordered. Phosphoserine is present on Ser-11. The residue at position 14 (Thr-14) is a Phosphothreonine. Residues 110-1618 (VTKMGDAHKE…REKSAANLEY (1509 aa)) are a coiled coil. 3 positions are modified to phosphoserine: Ser-236, Ser-1483, and Ser-1487. The interval 1475-1502 (LKNEPTTRSPVSSQQSLKNLRERRNTDL) is disordered. The span at 1477–1492 (NEPTTRSPVSSQQSLK) shows a compositional bias: polar residues. Residues 1574 to 1613 (HLNGLLRETEATNAILMEQIKLLKSEIRRLERNQEREKSA) form a mediates interaction with RAB6A region. A mediates interaction with RAB9A region spans residues 1574–1684 (HLNGLLRETE…SYLHSWSGLR (111 aa)). In terms of domain architecture, GRIP spans 1609–1659 (REKSAANLEYLKNVLLQFIFLKPGSERERLLPVINTMLQLSPEEKGKLAAV).

Homodimer. Interacts (via GRIP domain) with RAB6A (preferentially in its GTP-bound form). May interact (RAB6A-dependent) with ARL1; according to PubMed:19703403, RAB6A and ARL1 are not involved in GCC2 Golgi localization as proposed by PubMed:18243103. Interacts (probably via GRIP domain) with RAB9A (preferentially in its GTP-bound form). Interacts with CLASP1 and CLASP2; recruits both proteins to membranes of the TGN. Interacts with STX16. Ubiquitous.

Its subcellular location is the cytoplasm. The protein localises to the golgi apparatus. It localises to the trans-Golgi network membrane. Golgin which probably tethers transport vesicles to the trans-Golgi network (TGN) and regulates vesicular transport between the endosomes and the Golgi. As a RAB9A effector it is involved in recycling of the mannose 6-phosphate receptor from the late endosomes to the TGN. May also play a role in transport between the recycling endosomes and the Golgi. Required for maintenance of the Golgi structure, it is involved in the biogenesis of noncentrosomal, Golgi-associated microtubules through recruitment of CLASP1 and CLASP2. This Homo sapiens (Human) protein is GRIP and coiled-coil domain-containing protein 2 (GCC2).